The following is a 255-amino-acid chain: Na(+)-translocating NADH-quinone reductase subunit C (255 aa).

The chain crosses the membrane as a helical span at residues 11 to 31 (LGVVVGLSLVCSIIVSTAAVG). T223 carries the post-translational modification FMN phosphoryl threonine.

This sequence belongs to the NqrC family. In terms of assembly, composed of six subunits; NqrA, NqrB, NqrC, NqrD, NqrE and NqrF. The cofactor is FMN.

It is found in the cell inner membrane. The enzyme catalyses a ubiquinone + n Na(+)(in) + NADH + H(+) = a ubiquinol + n Na(+)(out) + NAD(+). Its function is as follows. NQR complex catalyzes the reduction of ubiquinone-1 to ubiquinol by two successive reactions, coupled with the transport of Na(+) ions from the cytoplasm to the periplasm. NqrA to NqrE are probably involved in the second step, the conversion of ubisemiquinone to ubiquinol. This Vibrio vulnificus (strain CMCP6) protein is Na(+)-translocating NADH-quinone reductase subunit C.